Reading from the N-terminus, the 360-residue chain is NADH-quinone oxidoreductase subunit H (360 aa).

Transmembrane regions (helical) follow at residues Ile22–Ile42, Ala97–Ile117, Ile130–Gly150, Ile170–Met190, Val208–Val228, Gly255–Leu275, Trp292–Tyr312, and Val336–Leu356.

Belongs to the complex I subunit 1 family. In terms of assembly, NDH-1 is composed of 14 different subunits. Subunits NuoA, H, J, K, L, M, N constitute the membrane sector of the complex.

The protein resides in the cell inner membrane. The enzyme catalyses a quinone + NADH + 5 H(+)(in) = a quinol + NAD(+) + 4 H(+)(out). Its function is as follows. NDH-1 shuttles electrons from NADH, via FMN and iron-sulfur (Fe-S) centers, to quinones in the respiratory chain. The immediate electron acceptor for the enzyme in this species is believed to be ubiquinone. Couples the redox reaction to proton translocation (for every two electrons transferred, four hydrogen ions are translocated across the cytoplasmic membrane), and thus conserves the redox energy in a proton gradient. This subunit may bind ubiquinone. The sequence is that of NADH-quinone oxidoreductase subunit H from Neisseria meningitidis serogroup C / serotype 2a (strain ATCC 700532 / DSM 15464 / FAM18).